Consider the following 782-residue polypeptide: Endonuclease MutS2 (782 aa).

ATP is bound at residue 336 to 343 (GPNTGGKT). Residues 707 to 782 (LDLRGYRYEE…GFGVTVAELK (76 aa)) enclose the Smr domain.

It belongs to the DNA mismatch repair MutS family. MutS2 subfamily. Homodimer. Binds to stalled ribosomes, contacting rRNA.

Its function is as follows. Endonuclease that is involved in the suppression of homologous recombination and thus may have a key role in the control of bacterial genetic diversity. In terms of biological role, acts as a ribosome collision sensor, splitting the ribosome into its 2 subunits. Detects stalled/collided 70S ribosomes which it binds and splits by an ATP-hydrolysis driven conformational change. Acts upstream of the ribosome quality control system (RQC), a ribosome-associated complex that mediates the extraction of incompletely synthesized nascent chains from stalled ribosomes and their subsequent degradation. Probably generates substrates for RQC. This Staphylococcus carnosus (strain TM300) protein is Endonuclease MutS2.